The following is a 263-amino-acid chain: HTH-type transcriptional repressor NanR (263 aa).

A disordered region spans residues 1-24; it reads MSPMNAFDSQTEDSSPAIGRNLRS. Residues 30 to 98 enclose the HTH gntR-type domain; it reads KKLSEMVEEE…NGERARVSRP (69 aa). Residues 58 to 77 constitute a DNA-binding region (H-T-H motif); that stretch reads ERELMAFFNVGRPSVREALA.

This sequence belongs to the NanR family.

In terms of biological role, transcriptional repressor that controls expression of the genes required for the catabolism of sialic acids. The sequence is that of HTH-type transcriptional repressor NanR from Escherichia coli O127:H6 (strain E2348/69 / EPEC).